Reading from the N-terminus, the 236-residue chain is Class B acid phosphatase (236 aa).

A signal peptide spans 1 to 22 (MNHTLRSITLVLACVASLSANA). Catalysis depends on aspartate 70, which acts as the Nucleophile. Mg(2+) contacts are provided by aspartate 70 and aspartate 72. The Proton donor role is filled by aspartate 72. Residues 138 to 139 (TG) and lysine 176 contribute to the substrate site. A Mg(2+)-binding site is contributed by aspartate 191.

It belongs to the class B bacterial acid phosphatase family. As to quaternary structure, homotetramer. The cofactor is Mg(2+).

It is found in the periplasm. The enzyme catalyses a phosphate monoester + H2O = an alcohol + phosphate. In terms of biological role, dephosphorylates several organic phosphate monoesters. Also has a phosphotransferase activity catalyzing the transfer of low-energy phosphate groups from organic phosphate monoesters to free hydroxyl groups of various organic compounds. The polypeptide is Class B acid phosphatase (Marinomonas sp. (strain MWYL1)).